We begin with the raw amino-acid sequence, 261 residues long: Proteasome assembly chaperone 2 (261 aa).

This sequence belongs to the PSMG2 family. In terms of assembly, forms a heterodimer with psmg1. Degraded by the proteasome upon completion of 20S proteasome maturation.

Its subcellular location is the nucleus. Its function is as follows. Chaperone protein which promotes assembly of the 20S proteasome as part of a heterodimer with psmg1. This is Proteasome assembly chaperone 2 from Xenopus tropicalis (Western clawed frog).